The primary structure comprises 254 residues: Type III pantothenate kinase (254 aa).

6–13 serves as a coordination point for ATP; it reads DVGNTNTV. Substrate-binding positions include Tyr100 and 107–110; that span reads GADR. Asp109 acts as the Proton acceptor in catalysis. Asp129 is a K(+) binding site. ATP is bound at residue Thr132. Thr184 provides a ligand contact to substrate.

This sequence belongs to the type III pantothenate kinase family. In terms of assembly, homodimer. Requires NH4(+) as cofactor. K(+) is required as a cofactor.

The protein localises to the cytoplasm. The catalysed reaction is (R)-pantothenate + ATP = (R)-4'-phosphopantothenate + ADP + H(+). The protein operates within cofactor biosynthesis; coenzyme A biosynthesis; CoA from (R)-pantothenate: step 1/5. In terms of biological role, catalyzes the phosphorylation of pantothenate (Pan), the first step in CoA biosynthesis. This is Type III pantothenate kinase from Syntrophus aciditrophicus (strain SB).